The sequence spans 280 residues: Small ribosomal subunit protein uS3 (280 aa).

A KH type-2 domain is found at 38–106 (IRRLLSTGLE…QVQLNILEVR (69 aa)). The tract at residues 215–280 (AAAAPAGAER…PAAEPQSTES (66 aa)) is disordered. Residues 238–280 (SGASGTTATGTEAGRAAASADESTAAGQPAEAAPAAEPQSTES) show a composition bias toward low complexity.

Belongs to the universal ribosomal protein uS3 family. As to quaternary structure, part of the 30S ribosomal subunit. Forms a tight complex with proteins S10 and S14.

Functionally, binds the lower part of the 30S subunit head. Binds mRNA in the 70S ribosome, positioning it for translation. This is Small ribosomal subunit protein uS3 from Mycolicibacterium paratuberculosis (strain ATCC BAA-968 / K-10) (Mycobacterium paratuberculosis).